Consider the following 658-residue polypeptide: Threonine--tRNA ligase (658 aa).

Positions 1-61 constitute a TGS domain; that stretch reads MSDVRVTVQR…AAGDVVEPIT (61 aa). Positions 259 to 554 are catalytic; it reads DHRRLGAELD…LLEHYAGALP (296 aa). Residues C353, H404, and H531 each coordinate Zn(2+).

This sequence belongs to the class-II aminoacyl-tRNA synthetase family. In terms of assembly, homodimer. The cofactor is Zn(2+).

The protein localises to the cytoplasm. The enzyme catalyses tRNA(Thr) + L-threonine + ATP = L-threonyl-tRNA(Thr) + AMP + diphosphate + H(+). In terms of biological role, catalyzes the attachment of threonine to tRNA(Thr) in a two-step reaction: L-threonine is first activated by ATP to form Thr-AMP and then transferred to the acceptor end of tRNA(Thr). Also edits incorrectly charged L-seryl-tRNA(Thr). This is Threonine--tRNA ligase from Parafrankia sp. (strain EAN1pec).